Reading from the N-terminus, the 300-residue chain is MKTGNQFNTVALVGRSNTPNIAEPLATLAACVAKRGFEVVFEAETAREIGITGYPALTPAEIGARADVAVVLGGDGTMLGIGRQLAPYKTPLIGINHGRLGFITDIAAADMQALVPVILSGKFEREERALLEARIMRDGEPIYHAIAFNDVVVNRSGFSGMVELRASVDGRYMYNQRSDGLIVATPTGSTAYALSSAGPILHPQLAGIVLVPIAPHALSNRPIVLPDDSKIAIQIVGGRDVNVNFDMQSFTALELNDTIEVRRSKHTVPFLHPIGYSYYATLRKKLHWNEHASNEDDKAS.

Asp-75 functions as the Proton acceptor in the catalytic mechanism. NAD(+) is bound by residues 75 to 76, 149 to 150, Arg-177, Asp-179, 190 to 195, Ala-214, and Gln-248; these read DG, ND, and TAYALS.

This sequence belongs to the NAD kinase family. A divalent metal cation serves as cofactor.

It is found in the cytoplasm. The enzyme catalyses NAD(+) + ATP = ADP + NADP(+) + H(+). Involved in the regulation of the intracellular balance of NAD and NADP, and is a key enzyme in the biosynthesis of NADP. Catalyzes specifically the phosphorylation on 2'-hydroxyl of the adenosine moiety of NAD to yield NADP. The protein is NAD kinase of Burkholderia lata (strain ATCC 17760 / DSM 23089 / LMG 22485 / NCIMB 9086 / R18194 / 383).